A 409-amino-acid chain; its full sequence is N-carbamoyl-L-amino acid amidohydrolase (409 aa).

Residues histidine 79, aspartate 90, glutamate 125, and histidine 189 each coordinate a divalent metal cation. Glutamine 192, histidine 225, asparagine 273, arginine 286, and alanine 355 together coordinate an N-carbamoyl-L-alpha-amino acid. Residues 208–325 (GIAGLIWVKF…TTERLQEMAP (118 aa)) are involved in dimerization. Residue histidine 380 coordinates a divalent metal cation.

The protein belongs to the peptidase M20 family. As to quaternary structure, homodimer. It depends on Mn(2+) as a cofactor. Ni(2+) is required as a cofactor. The cofactor is Co(2+). Requires Fe(2+) as cofactor.

The enzyme catalyses an N-carbamoyl-L-alpha-amino acid + H2O + 2 H(+) = an L-alpha-amino acid + NH4(+) + CO2. It carries out the reaction N-carbamoyl-L-methionine + H2O + 2 H(+) = L-methionine + NH4(+) + CO2. The catalysed reaction is N-acetyl-L-methionine + H2O = L-methionine + acetate. It catalyses the reaction N-carbamoyl-L-alanine + H2O + 2 H(+) = L-alanine + NH4(+) + CO2. The enzyme catalyses N-carbamoyl-L-glutamate + H2O + 2 H(+) = L-glutamate + NH4(+) + CO2. It carries out the reaction N-carbamoylglycine + H2O + 2 H(+) = glycine + NH4(+) + CO2. The catalysed reaction is N-carbamoyl-L-leucine + H2O + 2 H(+) = L-leucine + NH4(+) + CO2. Functionally, catalyzes the hydrolysis of aliphatic N-carbamoyl-L-alpha-amino acids to free L-alpha-amino acids. Is strictly L-specific since it is inactive toward N-carbamoyl-D-alpha-amino acids. Is not able to use aromatic N-carbamoyl-L-alpha-amino acids like N-carbamoyl-L-tryptophan and N-carbamoyl-L-phenylalanine as substrates, but is also able to hydrolyze N-acetyl-L-methionine. This is N-carbamoyl-L-amino acid amidohydrolase from Geobacillus stearothermophilus (Bacillus stearothermophilus).